A 512-amino-acid chain; its full sequence is UDP-N-acetylmuramate--L-alanine ligase (512 aa).

ATP is bound at residue 132–138 (GAHGKTT).

The protein belongs to the MurCDEF family.

It is found in the cytoplasm. The enzyme catalyses UDP-N-acetyl-alpha-D-muramate + L-alanine + ATP = UDP-N-acetyl-alpha-D-muramoyl-L-alanine + ADP + phosphate + H(+). Its pathway is cell wall biogenesis; peptidoglycan biosynthesis. Its function is as follows. Cell wall formation. The chain is UDP-N-acetylmuramate--L-alanine ligase from Bifidobacterium longum (strain NCC 2705).